Here is a 51-residue protein sequence, read N- to C-terminus: Large ribosomal subunit protein eL39 (51 aa).

This sequence belongs to the eukaryotic ribosomal protein eL39 family.

The polypeptide is Large ribosomal subunit protein eL39 (Thermococcus gammatolerans (strain DSM 15229 / JCM 11827 / EJ3)).